The primary structure comprises 287 residues: mRNA-capping enzyme regulatory subunit OPG124 (287 aa).

Belongs to the orthopoxvirus mRNA-capping enzyme regulatory subunit family. Interacts with the late transcription elongation factor VLTF-4/OPG110. Interacts with the late transcription factors VLTF-1.

It localises to the virion. Functionally, acts with RNA polymerase to initiate transcription from late gene promoters. This Monkeypox virus protein is mRNA-capping enzyme regulatory subunit OPG124 (OPG124).